A 433-amino-acid chain; its full sequence is Protoheme IX farnesyltransferase 2 (433 aa).

The tract at residues 1–164 is unknown; sequence MQRFTGLVTA…LTKPRLMWLL (164 aa). 13 consecutive transmembrane segments (helical) span residues 4–24, 35–55, 67–87, 95–115, 160–180, 184–204, 236–256, 257–277, 282–304, 308–330, 357–377, 378–398, and 413–433; these read FTGL…LGVA, AVAH…AAAL, WGVT…MAVL, LHLF…TWHL, LMWL…VTGA, GVTI…AGTF, AFGV…VNPL, AAAL…VVLK, WNTV…AVAG, LPAL…NLAI, ILYW…VAGF, GPVY…TVVV, and HASN…TMVI. Positions 165-430 are protoheme IX prenyltransferase; sequence CLLALSGMAL…ALLVAILVET (266 aa).

It in the C-terminal section; belongs to the UbiA prenyltransferase family. Protoheme IX farnesyltransferase subfamily.

The protein resides in the cell membrane. The catalysed reaction is heme b + (2E,6E)-farnesyl diphosphate + H2O = Fe(II)-heme o + diphosphate. It participates in porphyrin-containing compound metabolism; heme O biosynthesis; heme O from protoheme: step 1/1. In terms of biological role, converts heme B (protoheme IX) to heme O by substitution of the vinyl group on carbon 2 of heme B porphyrin ring with a hydroxyethyl farnesyl side group. In Natronomonas pharaonis (strain ATCC 35678 / DSM 2160 / CIP 103997 / JCM 8858 / NBRC 14720 / NCIMB 2260 / Gabara) (Halobacterium pharaonis), this protein is Protoheme IX farnesyltransferase 2 (ctaB2).